The sequence spans 82 residues: Putative Fe(2+) transport protein A (82 aa).

It belongs to the FeoA family.

Functionally, might be involved in Fe(2+) ion uptake. The sequence is that of Putative Fe(2+) transport protein A from Leptolyngbya boryana (Plectonema boryanum).